The following is a 604-amino-acid chain: UvrABC system protein C (604 aa).

The GIY-YIG domain occupies 15 to 92 (DLPGCYLMKN…IQKHQPYFNI (78 aa)). The 36-residue stretch at 197–232 (ETVKKQLTKRMDQAAADLEFERAAELRDQLNYIEMT) folds into the UVR domain.

It belongs to the UvrC family. In terms of assembly, interacts with UvrB in an incision complex.

It localises to the cytoplasm. Functionally, the UvrABC repair system catalyzes the recognition and processing of DNA lesions. UvrC both incises the 5' and 3' sides of the lesion. The N-terminal half is responsible for the 3' incision and the C-terminal half is responsible for the 5' incision. The chain is UvrABC system protein C from Lactiplantibacillus plantarum (strain ATCC BAA-793 / NCIMB 8826 / WCFS1) (Lactobacillus plantarum).